A 491-amino-acid polypeptide reads, in one-letter code: ATP-dependent protease ATPase subunit HslU (491 aa).

ATP-binding positions include Ile-34, Gly-76 to Glu-81, Asp-296, Glu-364, and Arg-436.

This sequence belongs to the ClpX chaperone family. HslU subfamily. As to quaternary structure, a double ring-shaped homohexamer of HslV is capped on each side by a ring-shaped HslU homohexamer. The assembly of the HslU/HslV complex is dependent on binding of ATP.

It localises to the cytoplasm. In terms of biological role, ATPase subunit of a proteasome-like degradation complex; this subunit has chaperone activity. The binding of ATP and its subsequent hydrolysis by HslU are essential for unfolding of protein substrates subsequently hydrolyzed by HslV. HslU recognizes the N-terminal part of its protein substrates and unfolds these before they are guided to HslV for hydrolysis. The chain is ATP-dependent protease ATPase subunit HslU from Chlorobaculum tepidum (strain ATCC 49652 / DSM 12025 / NBRC 103806 / TLS) (Chlorobium tepidum).